Here is a 263-residue protein sequence, read N- to C-terminus: Small ribosomal subunit protein uS15m (263 aa).

The transit peptide at 1-70 (MVLKSVFRST…VRQYARPSRK (70 aa)) directs the protein to the mitochondrion. Residues 238–251 (EREKQKAEEAERKK) show a composition bias toward basic and acidic residues. The tract at residues 238 to 263 (EREKQKAEEAERKKSSSSTNPQETAA) is disordered.

This sequence belongs to the universal ribosomal protein uS15 family. As to quaternary structure, component of the mitochondrial ribosome small subunit (28S) which comprises a 12S rRNA and about 30 distinct proteins.

It is found in the mitochondrion. In Danio rerio (Zebrafish), this protein is Small ribosomal subunit protein uS15m (mrps15).